The sequence spans 278 residues: uncharacterized protein (278 aa).

It localises to the cytoplasm. The protein localises to the nucleus. Its function is as follows. Probable methyltransferase. This is an uncharacterized protein from Schizosaccharomyces pombe (strain 972 / ATCC 24843) (Fission yeast).